Consider the following 350-residue polypeptide: Small ribosomal subunit biogenesis GTPase RsgA (350 aa).

The interval 1-30 (MSKRKLTQNQQRRIQSNNAKTLHRHQHRHK) is disordered. Residues 7–20 (TQNQQRRIQSNNAK) are compositionally biased toward polar residues. Positions 21 to 30 (TLHRHQHRHK) are enriched in basic residues. A CP-type G domain is found at 106-274 (HNQIVRPDYY…LIDSPGIREF (169 aa)). GTP-binding positions include 162–165 (NKAD) and 216–224 (GQSGVGKSS). The Zn(2+) site is built by C298, C303, H305, and C311.

It belongs to the TRAFAC class YlqF/YawG GTPase family. RsgA subfamily. In terms of assembly, monomer. Associates with 30S ribosomal subunit, binds 16S rRNA. Requires Zn(2+) as cofactor.

The protein resides in the cytoplasm. Its function is as follows. One of several proteins that assist in the late maturation steps of the functional core of the 30S ribosomal subunit. Helps release RbfA from mature subunits. May play a role in the assembly of ribosomal proteins into the subunit. Circularly permuted GTPase that catalyzes slow GTP hydrolysis, GTPase activity is stimulated by the 30S ribosomal subunit. The polypeptide is Small ribosomal subunit biogenesis GTPase RsgA (Histophilus somni (strain 2336) (Haemophilus somnus)).